Here is a 448-residue protein sequence, read N- to C-terminus: MHFIAISINHRTADVALREQVAFRDDALRIAHEDLYETKSILENVILSTCNRTEVYAVVDQIHTGRYYIQRFLARAFGFEVDDIKAMSEVKVGDEAVEHLLRVTSGLDSIVLGETQILGQIRDAFFLAQSTGTTGTIFNHLFKQAITFAKRAHNETDIADNAVSVSYAAVELAKKVFGKLKSKQAIIIGAGEMSELSLLNLLGSGITDITVVNRTIENAMKLAAKHQVKYDELSSLPNLLESADIVISSTSAQSYIITNEMIERIAENRKQDSLVLIDIAVPRDIEPGISAITNIFNYDVDDLKGLVDANLRERQLAAATISEQIPAEIHAHNEWVSMLGVVPVIRALREKAMAIQAETMDSIDRKLPGLSERERKIISKHTKSIINQMLKDPIKQAKELSSDKKSNEKFELFQNIFDIEAKCPHEQAKQQKESKVKEISARRIFSFE.

Residues 49–52 (TCNR), Ser109, 114–116 (ETQ), and Gln120 each bind substrate. Residue Cys50 is the Nucleophile of the active site. Position 189-194 (189-194 (GAGEMS)) interacts with NADP(+).

Belongs to the glutamyl-tRNA reductase family. In terms of assembly, homodimer.

The enzyme catalyses (S)-4-amino-5-oxopentanoate + tRNA(Glu) + NADP(+) = L-glutamyl-tRNA(Glu) + NADPH + H(+). It functions in the pathway porphyrin-containing compound metabolism; protoporphyrin-IX biosynthesis; 5-aminolevulinate from L-glutamyl-tRNA(Glu): step 1/2. In terms of biological role, catalyzes the NADPH-dependent reduction of glutamyl-tRNA(Glu) to glutamate 1-semialdehyde (GSA). This Staphylococcus aureus (strain MRSA252) protein is Glutamyl-tRNA reductase.